The sequence spans 227 residues: PKHD-type hydroxylase Veis_3084 (227 aa).

Residues 27–51 (DDGKDSAGTQARQAKNNQQLPRDSE) form a disordered region. Positions 33–47 (AGTQARQAKNNQQLP) are enriched in polar residues. A Fe2OG dioxygenase domain is found at 78–179 (RVFPPRVNRY…RMACFFWVES (102 aa)). Positions 97, 99, and 160 each coordinate Fe cation. A 2-oxoglutarate-binding site is contributed by arginine 170.

Fe(2+) is required as a cofactor. L-ascorbate serves as cofactor.

The polypeptide is PKHD-type hydroxylase Veis_3084 (Verminephrobacter eiseniae (strain EF01-2)).